We begin with the raw amino-acid sequence, 293 residues long: GTPase Era (293 aa).

An Era-type G domain is found at 5–174; the sequence is RTISVCIIGR…ITGKAQIAPW (170 aa). The G1 stretch occupies residues 13 to 20; it reads GRPNSGKS. 13–20 lines the GTP pocket; sequence GRPNSGKS. Residues 39–43 are G2; it reads QTTRS. The interval 60 to 63 is G3; sequence DTPG. GTP-binding positions include 60-64 and 122-125; these read DTPGI and NKID. The interval 122-125 is G4; the sequence is NKID. The interval 150 to 152 is G5; sequence ISA. The 78-residue stretch at 202–279 folds into the KH type-2 domain; the sequence is LQQELPYKLT…HLFLFVKVHE (78 aa).

Belongs to the TRAFAC class TrmE-Era-EngA-EngB-Septin-like GTPase superfamily. Era GTPase family. As to quaternary structure, monomer.

The protein resides in the cytoplasm. The protein localises to the cell inner membrane. An essential GTPase that binds both GDP and GTP, with rapid nucleotide exchange. Plays a role in 16S rRNA processing and 30S ribosomal subunit biogenesis and possibly also in cell cycle regulation and energy metabolism. This is GTPase Era from Rickettsia akari (strain Hartford).